The sequence spans 158 residues: Cytochrome c-type biogenesis protein CcmE (158 aa).

Residues 1 to 11 (MTRPDSGSSPA) show a composition bias toward polar residues. The tract at residues 1–20 (MTRPDSGSSPAPLSEARRRK) is disordered. Residues 1–23 (MTRPDSGSSPAPLSEARRRKRNP) are Cytoplasmic-facing. The chain crosses the membrane as a helical; Signal-anchor for type II membrane protein span at residues 24–44 (LPTVLGITALLGLAGFIAFGN). At 45–158 (LNKSLEYFVT…ELRDLLEQSE (114 aa)) the chain is on the extracellular side. The heme site is built by His137 and Tyr141.

This sequence belongs to the CcmE/CycJ family.

Its subcellular location is the cell membrane. Functionally, heme chaperone required for the biogenesis of c-type cytochromes. Transiently binds heme delivered by CcmC and transfers the heme to apo-cytochromes in a process facilitated by CcmF and CcmH. The polypeptide is Cytochrome c-type biogenesis protein CcmE (Deinococcus deserti (strain DSM 17065 / CIP 109153 / LMG 22923 / VCD115)).